Consider the following 479-residue polypeptide: Aspartyl/glutamyl-tRNA(Asn/Gln) amidotransferase subunit B (479 aa).

The protein belongs to the GatB/GatE family. GatB subfamily. In terms of assembly, heterotrimer of A, B and C subunits.

The catalysed reaction is L-glutamyl-tRNA(Gln) + L-glutamine + ATP + H2O = L-glutaminyl-tRNA(Gln) + L-glutamate + ADP + phosphate + H(+). It catalyses the reaction L-aspartyl-tRNA(Asn) + L-glutamine + ATP + H2O = L-asparaginyl-tRNA(Asn) + L-glutamate + ADP + phosphate + 2 H(+). Allows the formation of correctly charged Asn-tRNA(Asn) or Gln-tRNA(Gln) through the transamidation of misacylated Asp-tRNA(Asn) or Glu-tRNA(Gln) in organisms which lack either or both of asparaginyl-tRNA or glutaminyl-tRNA synthetases. The reaction takes place in the presence of glutamine and ATP through an activated phospho-Asp-tRNA(Asn) or phospho-Glu-tRNA(Gln). The chain is Aspartyl/glutamyl-tRNA(Asn/Gln) amidotransferase subunit B from Deinococcus radiodurans (strain ATCC 13939 / DSM 20539 / JCM 16871 / CCUG 27074 / LMG 4051 / NBRC 15346 / NCIMB 9279 / VKM B-1422 / R1).